We begin with the raw amino-acid sequence, 772 residues long: MAEAHQAVAFQFTVTPDGVDFRLSREALRHIYLSGINSWKKRLIRIKNGILRGVYPGSPTSWLVVVMATVGSNYCKVDISMGLVHCIQRCLPTRYGSYGTPQTETLLSMVIFSTGVWATGIFLFRQTLKLLLSYHGWMFEMHSKTSHATKIWAICVRLLSSRRPMLYSFQTSLPKLPVPSVPATIHRYLDSVRPLLDDEAYFRMESLAKEFQDKIAPRLQKYLVLKSWWATNYVSDWWEEYVYLRGRSPIMVNSNYYAMDFVLIKNTSQQAARLGNTVHAMIMYRRKLDREEIKPVMALGMVPMCSYQMERMFNTTRIPGKETDLLQHLSESRHVAVYHKGRFFKVWLYEGSCLLKPRDLEMQFQRILDDTSPPQPGEEKLAALTAGGRVEWAEARQKFFSSGKNKMSLDTIERAAFFVALDEDSHCYNPDDEASLSLYGKSLLHGNCYNRWFDKSFTLISCKNGQLGLNTEHSWADAPIIGHLWEFVLATDTFHLGYTETGHCVGEPNTKLPPPQRMQWDIPEQCQTAIENSYQVAKALADDVELYCFQFLPFGKGLIKKCRTSPDAFVQIALQLAHFRDKGKFCLTYEASMTRMFREGRTETVRSCTSESTAFVRAMMTGSHKKQDLQDLFRKASEKHQNMYRLAMTGAGIDRHLFCLYIVSKYLGVRSPFLDEVLSEPWSLSTSQIPQFQICMFDPKQYPNHLGAGGGFGPVADHGYGVSYMIAGENTMFFHVSSKLSSSETNALRFGNHIRQALLDIADLFKISKTDS.

Residues 1–47 (MAEAHQAVAFQFTVTPDGVDFRLSREALRHIYLSGINSWKKRLIRIK) lie on the Cytoplasmic side of the membrane. The chain crosses the membrane as a helical span at residues 48-73 (NGILRGVYPGSPTSWLVVVMATVGSN). The Mitochondrial intermembrane segment spans residues 74–102 (YCKVDISMGLVHCIQRCLPTRYGSYGTPQ). The helical transmembrane segment at 103–122 (TETLLSMVIFSTGVWATGIF) threads the bilayer. Residues 123-772 (LFRQTLKLLL…DLFKISKTDS (650 aa)) lie on the Cytoplasmic side of the membrane. The Proton acceptor role is filled by histidine 473. 555-567 (GKGLIKKCRTSPD) lines the CoA pocket. (R)-carnitine-binding residues include tyrosine 589 and threonine 602.

This sequence belongs to the carnitine/choline acetyltransferase family. High expression in heart, skeletal muscle and brown adipose tissue. Also expressed in white adipose tissue, but not in liver.

Its subcellular location is the mitochondrion outer membrane. The catalysed reaction is (R)-carnitine + hexadecanoyl-CoA = O-hexadecanoyl-(R)-carnitine + CoA. The protein operates within lipid metabolism; fatty acid beta-oxidation. In terms of biological role, catalyzes the transfer of the acyl group of long-chain fatty acid-CoA conjugates onto carnitine, an essential step for the mitochondrial uptake of long-chain fatty acids and their subsequent beta-oxidation in the mitochondrion. The polypeptide is Carnitine O-palmitoyltransferase 1, muscle isoform (Cpt1b) (Rattus norvegicus (Rat)).